The sequence spans 348 residues: NAC domain-containing protein 101 (348 aa).

Positions 7 to 156 (IPPGYRFHPT…GWVVCRAFKK (150 aa)) constitute an NAC domain. Residues 107–162 (VGMRKTLVFYKGRAPNGQKSDWIMHEYRLETDENGPPHEEGWVVCRAFKKKLTTMN) mediate DNA binding. The interval 325–348 (MVSMNASSSSSPCSFYSWAQNTHT) is disordered. Over residues 327-341 (SMNASSSSSPCSFYS) the composition is skewed to low complexity.

It belongs to the plant vascular related NAC-domain protein family. In terms of assembly, homodimer. In terms of tissue distribution, expressed in root inner metaxylem vessels and in hypocotyl vessels. Present in root developing xylems. Accumulates in the xylem but not in interfascicular fibers or pith cells in inflorescence stems. Absent from secondary xylem in roots.

It is found in the nucleus. Transcription activator that binds to the secondary wall NAC binding element (SNBE), 5'-(T/A)NN(C/T)(T/C/G)TNNNNNNNA(A/C)GN(A/C/T)(A/T)-3', and to the tracheary elements (TE) specific regulating cis-element (TERE), 5'-CTTNAAAGCNA-3', in the promoter of target genes (e.g. genes involved in secondary wall biosynthesis, cell wall modification such as xylan accumulation, and programmed cell death). Involved in xylem formation in roots and shoots, especially regulating metaxylem vessel differentiation by promoting immature xylem vessel-specific genes expression, especially genes regulating programmed cell death (PCD) and secondary wall formation in tracheary elements (TE). Can activate MYB25, MYB46, MYB58, MYB63, MYB83, MYB103, CESA4, LBD15, LBD30, ERF115, XCP1, XCP2, NAC010/SND3, KNAT7, ASL19 and ASL20 expression. The polypeptide is NAC domain-containing protein 101 (Arabidopsis thaliana (Mouse-ear cress)).